Consider the following 394-residue polypeptide: Alanine racemase 2 (394 aa).

Catalysis depends on lysine 39, which acts as the Proton acceptor; specific for D-alanine. Lysine 39 is subject to N6-(pyridoxal phosphate)lysine. Arginine 139 contacts substrate. Tyrosine 272 acts as the Proton acceptor; specific for L-alanine in catalysis. Methionine 320 provides a ligand contact to substrate.

It belongs to the alanine racemase family. Requires pyridoxal 5'-phosphate as cofactor.

It catalyses the reaction L-alanine = D-alanine. It functions in the pathway amino-acid biosynthesis; D-alanine biosynthesis; D-alanine from L-alanine: step 1/1. Its function is as follows. Catalyzes the interconversion of L-alanine and D-alanine. May also act on other amino acids. In Bacillus subtilis (strain 168), this protein is Alanine racemase 2 (alr2).